The chain runs to 33 residues: Cytochrome b6-f complex subunit 8 (33 aa).

The chain crosses the membrane as a helical span at residues 2-22; it reads LFTLAWASLAAVFSFSIAMVV.

Belongs to the PetN family. As to quaternary structure, the 4 large subunits of the cytochrome b6-f complex are cytochrome b6, subunit IV (17 kDa polypeptide, PetD), cytochrome f and the Rieske protein, while the 4 small subunits are PetG, PetL, PetM and PetN. The complex functions as a dimer.

It is found in the cellular thylakoid membrane. Component of the cytochrome b6-f complex, which mediates electron transfer between photosystem II (PSII) and photosystem I (PSI), cyclic electron flow around PSI, and state transitions. In Prochlorococcus marinus (strain MIT 9303), this protein is Cytochrome b6-f complex subunit 8.